A 444-amino-acid chain; its full sequence is Phosphoglucosamine mutase (444 aa).

Ser-104 acts as the Phosphoserine intermediate in catalysis. Residues Ser-104, Asp-243, Asp-245, and Asp-247 each contribute to the Mg(2+) site. At Ser-104 the chain carries Phosphoserine.

The protein belongs to the phosphohexose mutase family. It depends on Mg(2+) as a cofactor. In terms of processing, activated by phosphorylation.

It carries out the reaction alpha-D-glucosamine 1-phosphate = D-glucosamine 6-phosphate. Catalyzes the conversion of glucosamine-6-phosphate to glucosamine-1-phosphate. The polypeptide is Phosphoglucosamine mutase (Neisseria meningitidis serogroup C (strain 053442)).